The sequence spans 433 residues: Tubulin epsilon and delta complex protein 2 (433 aa).

Disordered regions lie at residues 45-69 (TGTR…ACTP), 95-169 (TKAG…VGMG), and 326-345 (QPPR…SCGG). Positions 107–120 (KSRSIVTSSGTTAS) are enriched in polar residues. S159 carries the post-translational modification Phosphoserine. The segment covering 327 to 339 (PPRPCPVGRPPGA) has biased composition (pro residues).

As to quaternary structure, interacts with TEDC1. Found in a complex with TEDC1, TEDC2, TUBE1 and TUBD1.

The protein localises to the cell projection. It localises to the cilium. It is found in the cytoplasm. Its subcellular location is the cytoskeleton. The protein resides in the microtubule organizing center. The protein localises to the centrosome. It localises to the centriole. Functionally, acts as a positive regulator of ciliary hedgehog signaling. Required for centriole stability. In Homo sapiens (Human), this protein is Tubulin epsilon and delta complex protein 2.